The chain runs to 309 residues: tRNA dimethylallyltransferase (309 aa).

ATP is bound at residue 14-21 (GPTASGKS). Residue 16 to 21 (TASGKS) participates in substrate binding. The segment at 39 to 42 (DSMQ) is interaction with substrate tRNA.

This sequence belongs to the IPP transferase family. In terms of assembly, monomer. Mg(2+) is required as a cofactor.

The catalysed reaction is adenosine(37) in tRNA + dimethylallyl diphosphate = N(6)-dimethylallyladenosine(37) in tRNA + diphosphate. In terms of biological role, catalyzes the transfer of a dimethylallyl group onto the adenine at position 37 in tRNAs that read codons beginning with uridine, leading to the formation of N6-(dimethylallyl)adenosine (i(6)A). The polypeptide is tRNA dimethylallyltransferase (Geobacter metallireducens (strain ATCC 53774 / DSM 7210 / GS-15)).